A 507-amino-acid chain; its full sequence is MFHLLIYPLWVLVALFAVIIANLLYQQLPRRPDEPPLVFHWFPFFGNAVAYGLDPCGFFEKCREKHGDVFTFILFGRKIVACLGVDGNDFVLNSRLQDANAEEVYGPLTIPVFGSDVVYDCPNSKLMEQKKFVKFGLTQKALESHVQLIEREVLDYVETDPSFSGRTSTIDVPKAMAEITIFTASRSLQGEEVRRKLTAEFAALYHDLDLGFRPVNFLFPWLPLPHNRKRDAAHIKMREVYMDIINDRRKGGIRTEDGTDMIANLMGCTYKNGQPVPDKEIAHMMITLLMAGQHSSSSASSWIVLHLASSPDITEELYQEQLVNLSVNGALPPLQYSDLDKLPLLQNVVKETLRVHSSIHSILRKVKRPMQVPNSPYTITTDKVIMASPTVTAMSEEYFENAKTWNPHRWDNRAKEEVDTEDVIDYGYGAVSKGTKSPYLPFGAGRHRCIGEKFAYVNLGVIVATLVRNFRLSTIDGRPGVPETDYTSLFSRPAQPAFIRWERRKKI.

A helical membrane pass occupies residues 7 to 29; it reads YPLWVLVALFAVIIANLLYQQLP. Residue tyrosine 105 coordinates lanosterol. A heme-binding site is contributed by cysteine 449.

The protein belongs to the cytochrome P450 family. It depends on heme as a cofactor.

It is found in the endoplasmic reticulum membrane. The catalysed reaction is a 14alpha-methyl steroid + 3 reduced [NADPH--hemoprotein reductase] + 3 O2 = a Delta(14) steroid + formate + 3 oxidized [NADPH--hemoprotein reductase] + 4 H2O + 4 H(+). The enzyme catalyses a 14alpha-methyl steroid + reduced [NADPH--hemoprotein reductase] + O2 = a 14alpha-hydroxymethyl steroid + oxidized [NADPH--hemoprotein reductase] + H2O + H(+). It carries out the reaction a 14alpha-hydroxymethyl steroid + reduced [NADPH--hemoprotein reductase] + O2 = a 14alpha-formyl steroid + oxidized [NADPH--hemoprotein reductase] + 2 H2O + H(+). It catalyses the reaction a 14alpha-formyl steroid + reduced [NADPH--hemoprotein reductase] + O2 = a Delta(14) steroid + formate + oxidized [NADPH--hemoprotein reductase] + H2O + 2 H(+). The catalysed reaction is lanosterol + 3 reduced [NADPH--hemoprotein reductase] + 3 O2 = 4,4-dimethyl-5alpha-cholesta-8,14,24-trien-3beta-ol + formate + 3 oxidized [NADPH--hemoprotein reductase] + 4 H2O + 4 H(+). The enzyme catalyses lanosterol + reduced [NADPH--hemoprotein reductase] + O2 = 32-hydroxylanosterol + oxidized [NADPH--hemoprotein reductase] + H2O + H(+). It carries out the reaction 32-hydroxylanosterol + reduced [NADPH--hemoprotein reductase] + O2 = 32-oxolanosterol + oxidized [NADPH--hemoprotein reductase] + 2 H2O + H(+). It catalyses the reaction 32-oxolanosterol + reduced [NADPH--hemoprotein reductase] + O2 = 4,4-dimethyl-5alpha-cholesta-8,14,24-trien-3beta-ol + formate + oxidized [NADPH--hemoprotein reductase] + H2O + 2 H(+). The catalysed reaction is eburicol + 3 reduced [NADPH--hemoprotein reductase] + 3 O2 = 14-demethyleburicol + formate + 3 oxidized [NADPH--hemoprotein reductase] + 4 H2O + 4 H(+). The enzyme catalyses eburicol + reduced [NADPH--hemoprotein reductase] + O2 = 32-hydroxyeburicol + oxidized [NADPH--hemoprotein reductase] + H2O + H(+). It carries out the reaction 32-hydroxyeburicol + reduced [NADPH--hemoprotein reductase] + O2 = 32-oxoeburicol + oxidized [NADPH--hemoprotein reductase] + 2 H2O + H(+). It catalyses the reaction 32-oxoeburicol + reduced [NADPH--hemoprotein reductase] + O2 = 14-demethyleburicol + formate + oxidized [NADPH--hemoprotein reductase] + H2O + 2 H(+). The protein operates within steroid metabolism; ergosterol biosynthesis. Its function is as follows. Together with cyp51B and cyp51C, encodes the sterol 14alpha-demethylase that plays a critical role in the third module of ergosterol biosynthesis pathway, being ergosterol the major sterol component in fungal membranes that participates in a variety of functions. CYP51A encodes the sterol 14-alpha-demethylase induced on ergosterol depletion and is responsible for the intrinsic variation in azole sensitivity. The third module or late pathway involves the ergosterol synthesis itself through consecutive reactions that mainly occur in the endoplasmic reticulum (ER) membrane. In filamentous fungi, during the initial step of this module, lanosterol (lanosta-8,24-dien-3beta-ol) can be metabolized to eburicol. Sterol 14alpha-demethylase catalyzes the three-step oxidative removal of the 14alpha-methyl group (C-32) of both these sterols in the form of formate, and converts eburicol and lanosterol to 14-demethyleburicol (4,4,24-trimethylergosta-8,14,24(28)-trienol) and 4,4-dimethyl-5alpha-cholesta-8,14,24-trien-3beta-ol, respectively, which are further metabolized by other enzymes in the pathway to ergosterol. Can also use substrates not intrinsic to fungi, such as 24,25-dihydrolanosterol (DHL), producing 4,4'-dimethyl-8,14-cholestadien-3-beta-ol, but at lower rates than the endogenous substrates. The chain is Sterol 14-alpha demethylase CYP51A from Gibberella zeae (strain ATCC MYA-4620 / CBS 123657 / FGSC 9075 / NRRL 31084 / PH-1) (Wheat head blight fungus).